Here is a 450-residue protein sequence, read N- to C-terminus: DNA primase DnaG (450 aa).

One can recognise a Toprim domain in the interval 199 to 273 (DSIIVVEGRA…DVDYVARAPE (75 aa)). The Mg(2+) site is built by Glu205, Asp247, and Asp249. The span at 320–348 (APSKEVKPAPKHEPKPQPVEQKPREEKII) shows a compositional bias: basic and acidic residues. Residues 320-350 (APSKEVKPAPKHEPKPQPVEQKPREEKIIRP) form a disordered region.

It belongs to the archaeal DnaG primase family. Forms a ternary complex with MCM helicase and DNA. Component of the archaeal exosome complex. Mg(2+) is required as a cofactor.

It catalyses the reaction ssDNA + n NTP = ssDNA/pppN(pN)n-1 hybrid + (n-1) diphosphate.. Functionally, RNA polymerase that catalyzes the synthesis of short RNA molecules used as primers for DNA polymerase during DNA replication. Also part of the exosome, which is a complex involved in RNA degradation. Acts as a poly(A)-binding protein that enhances the interaction between heteromeric, adenine-rich transcripts and the exosome. The chain is DNA primase DnaG from Thermococcus gammatolerans (strain DSM 15229 / JCM 11827 / EJ3).